Here is a 107-residue protein sequence, read N- to C-terminus: MMTESEFIRASEALFEHIEDQIDENGWDFDCRFAGNVLTIEAGDGAQIIVNRHTPNQELWIAAKSGGYHFAEQNGKWLATRDGRDFYDVLNEALSAASGEAVEIAEL.

It belongs to the frataxin family.

Involved in iron-sulfur (Fe-S) cluster assembly. May act as a regulator of Fe-S biogenesis. This is Iron-sulfur cluster assembly protein CyaY from Neisseria meningitidis serogroup B (strain ATCC BAA-335 / MC58).